Consider the following 144-residue polypeptide: Large ribosomal subunit protein bL31c (144 aa).

Residues 1 to 48 (MAVSLPNSFLQISPCVPSLQLRKPVMAAVKGGKQSVRRSSNTVVQITC) constitute a chloroplast transit peptide.

The protein belongs to the bacterial ribosomal protein bL31 family. Type A subfamily. As to quaternary structure, part of the 50S ribosomal subunit.

The protein resides in the plastid. It is found in the chloroplast. Functionally, binds the 23S rRNA. In Arabidopsis thaliana (Mouse-ear cress), this protein is Large ribosomal subunit protein bL31c (RPL31).